The primary structure comprises 299 residues: Transcription elongation factor A protein 2 (299 aa).

The 78-residue stretch at 6 to 83 (EEIARIARRL…KSWKKLLDAS (78 aa)) folds into the TFIIS N-terminal domain. Lysine 58 participates in a covalent cross-link: Glycyl lysine isopeptide (Lys-Gly) (interchain with G-Cter in ubiquitin). Phosphoserine occurs at positions 60 and 100. Residues 86–128 (KARERGRGMPLPTSSRDASEAPDPSRKRPELPRAPSTPRITTF) are disordered. Residues 102 to 116 (DASEAPDPSRKRPEL) show a composition bias toward basic and acidic residues. One can recognise a TFIIS central domain in the interval 138–254 (VRNKCREMLT…EHQMARTGGT (117 aa)). The TFIIS-type zinc-finger motif lies at 257–297 (DLFTCGKCRKKNCTYTQVQTRSSDEPMTTFVVCNECGNRWK). Zn(2+) is bound by residues cysteine 261, cysteine 264, cysteine 289, and cysteine 292.

It belongs to the TFS-II family. Interacts with the basal transcription factor GTF2B. Interacts with REXO1. In terms of tissue distribution, testis and ovary specific.

It is found in the nucleus. Its function is as follows. Necessary for efficient RNA polymerase II transcription elongation past template-encoded arresting sites. The arresting sites in DNA have the property of trapping a certain fraction of elongating RNA polymerases that pass through, resulting in locked ternary complexes. Cleavage of the nascent transcript by S-II allows the resumption of elongation from the new 3'-terminus. The polypeptide is Transcription elongation factor A protein 2 (TCEA2) (Homo sapiens (Human)).